Consider the following 157-residue polypeptide: Phosphopantetheine adenylyltransferase (157 aa).

Ser-9 contacts substrate. ATP contacts are provided by residues Ser-9–Phe-10 and His-17. 3 residues coordinate substrate: Lys-41, Thr-73, and Arg-87. ATP is bound by residues Gly-88–Arg-90, Glu-98, and Tyr-122–Ser-128.

This sequence belongs to the bacterial CoaD family. In terms of assembly, homohexamer. The cofactor is Mg(2+).

It localises to the cytoplasm. It catalyses the reaction (R)-4'-phosphopantetheine + ATP + H(+) = 3'-dephospho-CoA + diphosphate. It functions in the pathway cofactor biosynthesis; coenzyme A biosynthesis; CoA from (R)-pantothenate: step 4/5. Functionally, reversibly transfers an adenylyl group from ATP to 4'-phosphopantetheine, yielding dephospho-CoA (dPCoA) and pyrophosphate. The polypeptide is Phosphopantetheine adenylyltransferase (Oenococcus oeni (strain ATCC BAA-331 / PSU-1)).